The following is a 257-amino-acid chain: Aspartate/glutamate leucyltransferase (257 aa).

This sequence belongs to the R-transferase family. Bpt subfamily.

The protein localises to the cytoplasm. The enzyme catalyses N-terminal L-glutamyl-[protein] + L-leucyl-tRNA(Leu) = N-terminal L-leucyl-L-glutamyl-[protein] + tRNA(Leu) + H(+). It catalyses the reaction N-terminal L-aspartyl-[protein] + L-leucyl-tRNA(Leu) = N-terminal L-leucyl-L-aspartyl-[protein] + tRNA(Leu) + H(+). In terms of biological role, functions in the N-end rule pathway of protein degradation where it conjugates Leu from its aminoacyl-tRNA to the N-termini of proteins containing an N-terminal aspartate or glutamate. This is Aspartate/glutamate leucyltransferase from Phenylobacterium zucineum (strain HLK1).